The chain runs to 381 residues: Homoserine O-succinyltransferase (381 aa).

The region spanning 45–360 is the AB hydrolase-1 domain; sequence NAVLVCHALN…PHGHDAFLLD (316 aa). Serine 151 acts as the Nucleophile in catalysis. Arginine 221 is a substrate binding site. Active-site residues include aspartate 321 and histidine 354. Aspartate 355 contributes to the substrate binding site.

The protein belongs to the AB hydrolase superfamily. MetX family. As to quaternary structure, homodimer.

The protein localises to the cytoplasm. It catalyses the reaction L-homoserine + succinyl-CoA = O-succinyl-L-homoserine + CoA. The protein operates within amino-acid biosynthesis; L-methionine biosynthesis via de novo pathway; O-succinyl-L-homoserine from L-homoserine: step 1/1. Functionally, transfers a succinyl group from succinyl-CoA to L-homoserine, forming succinyl-L-homoserine. The sequence is that of Homoserine O-succinyltransferase from Burkholderia thailandensis (strain ATCC 700388 / DSM 13276 / CCUG 48851 / CIP 106301 / E264).